A 358-amino-acid chain; its full sequence is D-alanine--D-alanine ligase (358 aa).

An ATP-grasp domain is found at 136-341 (KYILQAAGVP…YGDLIEELIQ (206 aa)). 169–224 (EGSLLYPMFVKPANMGSSVGISKAENREELQNALALAYQYDSRAIVEQGIEAREIE) is a binding site for ATP. 3 residues coordinate Mg(2+): Asp-295, Glu-308, and Asn-310.

It belongs to the D-alanine--D-alanine ligase family. Mg(2+) is required as a cofactor. Mn(2+) serves as cofactor.

The protein localises to the cytoplasm. It carries out the reaction 2 D-alanine + ATP = D-alanyl-D-alanine + ADP + phosphate + H(+). Its pathway is cell wall biogenesis; peptidoglycan biosynthesis. In terms of biological role, cell wall formation. The sequence is that of D-alanine--D-alanine ligase from Enterococcus hirae (strain ATCC 9790 / DSM 20160 / JCM 8729 / LMG 6399 / NBRC 3181 / NCIMB 6459 / NCDO 1258 / NCTC 12367 / WDCM 00089 / R).